The chain runs to 352 residues: Photosystem II D2 protein (352 aa).

Threonine 2 carries the post-translational modification N-acetylthreonine. Phosphothreonine is present on threonine 2. The chain crosses the membrane as a helical span at residues 40–60 (CAYFALGGWLTGTTFVTSWYT). Residue histidine 117 participates in chlorophyll a binding. A helical membrane pass occupies residues 124-140 (GFMLRQFEIARSVNLRP). Positions 129 and 142 each coordinate pheophytin a. The chain crosses the membrane as a helical span at residues 152–165 (VFVSVFLIYPLGQS). Histidine 197 is a chlorophyll a binding site. The chain crosses the membrane as a helical span at residues 207–227 (AALLCAIHGATVENTLFEDGD). Residues histidine 214 and phenylalanine 261 each coordinate a plastoquinone. Residue histidine 214 coordinates Fe cation. A Fe cation-binding site is contributed by histidine 268. The helical transmembrane segment at 278-294 (GLWMSAIGVVGLALNLR) threads the bilayer.

Belongs to the reaction center PufL/M/PsbA/D family. PSII is composed of 1 copy each of membrane proteins PsbA, PsbB, PsbC, PsbD, PsbE, PsbF, PsbH, PsbI, PsbJ, PsbK, PsbL, PsbM, PsbT, PsbX, PsbY, PsbZ, Psb30/Ycf12, at least 3 peripheral proteins of the oxygen-evolving complex and a large number of cofactors. It forms dimeric complexes. The D1/D2 heterodimer binds P680, chlorophylls that are the primary electron donor of PSII, and subsequent electron acceptors. It shares a non-heme iron and each subunit binds pheophytin, quinone, additional chlorophylls, carotenoids and lipids. There is also a Cl(-1) ion associated with D1 and D2, which is required for oxygen evolution. The PSII complex binds additional chlorophylls, carotenoids and specific lipids. is required as a cofactor. Phosphorylated in vitro.

The protein resides in the plastid. Its subcellular location is the chloroplast thylakoid membrane. The enzyme catalyses 2 a plastoquinone + 4 hnu + 2 H2O = 2 a plastoquinol + O2. In terms of biological role, photosystem II (PSII) is a light-driven water:plastoquinone oxidoreductase that uses light energy to abstract electrons from H(2)O, generating O(2) and a proton gradient subsequently used for ATP formation. It consists of a core antenna complex that captures photons, and an electron transfer chain that converts photonic excitation into a charge separation. The D1/D2 (PsbA/PsbD) reaction center heterodimer binds P680, the primary electron donor of PSII as well as several subsequent electron acceptors. D2 is needed for assembly of a stable PSII complex. The protein is Photosystem II D2 protein of Chlamydomonas reinhardtii (Chlamydomonas smithii).